A 915-amino-acid polypeptide reads, in one-letter code: DNA (cytosine-5)-methyltransferase 3 (915 aa).

Residues 1-14 (MAPSSPSSARPTRA) show a composition bias toward low complexity. Disordered stretches follow at residues 1-107 (MAPS…AEEQ) and 152-171 (HSNW…PEED). The segment covering 21–30 (AMAEEIHQNQ) has biased composition (basic and acidic residues). The segment covering 42–57 (AKRRRKAASSGKKPKP) has biased composition (basic residues). Residues 71-80 (KKGETEKTEP) are compositionally biased toward basic and acidic residues. Acidic residues predominate over residues 81–107 (VVDDVCAEEPDEEELAMGEEEAEAEEQ). The region spanning 188 to 313 (IVYCLGDDVY…VAYSTFANIS (126 aa)) is the BAH domain. Polar residues predominate over residues 315–328 (ENGQSGSETASGIS). A disordered region spans residues 315-338 (ENGQSGSETASGISSDDAGLETSS). One can recognise an SAM-dependent MTase C5-type domain in the interval 345-876 (ATLLDLYSGC…YCLGQAYLGE (532 aa)). The Chromo domain occupies 445-508 (FVVQKLIGIR…EGRKRKILPL (64 aa)). The active site involves cysteine 521.

It belongs to the class I-like SAM-binding methyltransferase superfamily. C5-methyltransferase family.

It is found in the nucleus. The enzyme catalyses a 2'-deoxycytidine in DNA + S-adenosyl-L-methionine = a 5-methyl-2'-deoxycytidine in DNA + S-adenosyl-L-homocysteine + H(+). Its function is as follows. May be involved in the CpXpG methylation and in gene silencing. This is DNA (cytosine-5)-methyltransferase 3 (DMT105) from Zea mays (Maize).